Reading from the N-terminus, the 570-residue chain is MAYEKSTDISDVSRSMFLYPWLEYPDKTKELRKAMAPVHLPLSCYQMPKEEFPPSPECWRQHPSKPNSVPYCYFKKPEIYTHWHDLYDQREEREAEKMLRKMRDDCRYIKEVHQTHIKMFHLPMSKLTIKSEMRSRPLEPTQDPLKWQRLRELTKSLESPREDEQFYAAQALGCLRISDKFVMEALQQVAQTGPEKVKYEAYRTLAILGCLNKHVIRALIKQLKEKNEGQRMETLTGLRMALNSWAAVSKDKRTQVGDEGKLVPVLQTLIKKSSSEASLEAALCLGFLRPCSNMVQEFLLQCLCQGLKTQRMKALRMLVKVMHVHSAPVIKAILDQLCSSSVLEDRFEATQMLKTIGLEQIQAQGLEELTFNLLRRKTHNEPFLAVRQAVAQTVEELKLKPTMMNLVEAQLMNPDATARQEAVISLGVLGIRSPQVFHLLLDLLDAENHQAVKKSLQETLILCASIDPWIQNKLKNKVLSVYEAPKTNVKAEPTRFQKEPENPEELTIQDFRLAKLNPLFIAKSITKVGQKKTPAFPPCCSKPRKHRPQVIGPWQPRIKKQLRVLAEIAK.

In Homo sapiens (Human), this protein is Protein HEATR9 (HEATR9).